The sequence spans 92 residues: Small ribosomal subunit protein uS19 (92 aa).

This sequence belongs to the universal ribosomal protein uS19 family.

Its function is as follows. Protein S19 forms a complex with S13 that binds strongly to the 16S ribosomal RNA. The protein is Small ribosomal subunit protein uS19 of Sinorhizobium medicae (strain WSM419) (Ensifer medicae).